Here is a 188-residue protein sequence, read N- to C-terminus: Photosystem I assembly protein Ycf4 (188 aa).

2 consecutive transmembrane segments (helical) span residues 26-46 (YFWAIAVSVGGTGFLLAGLSS) and 68-88 (LVMGLYGIAAILLASYLWFVI).

Belongs to the Ycf4 family.

It localises to the cellular thylakoid membrane. Seems to be required for the assembly of the photosystem I complex. This is Photosystem I assembly protein Ycf4 from Synechococcus sp. (strain ATCC 27144 / PCC 6301 / SAUG 1402/1) (Anacystis nidulans).